The following is a 438-amino-acid chain: Protein DSE3 (438 aa).

Its subcellular location is the bud neck. In terms of biological role, may be involved in the establishment of the daughter fate. The protein is Protein DSE3 (DSE3) of Candida glabrata (strain ATCC 2001 / BCRC 20586 / JCM 3761 / NBRC 0622 / NRRL Y-65 / CBS 138) (Yeast).